A 1363-amino-acid polypeptide reads, in one-letter code: DNA-directed RNA polymerase subunit beta (1363 aa).

Belongs to the RNA polymerase beta chain family. In terms of assembly, the RNAP catalytic core consists of 2 alpha, 1 beta, 1 beta' and 1 omega subunit. When a sigma factor is associated with the core the holoenzyme is formed, which can initiate transcription.

The enzyme catalyses RNA(n) + a ribonucleoside 5'-triphosphate = RNA(n+1) + diphosphate. Its function is as follows. DNA-dependent RNA polymerase catalyzes the transcription of DNA into RNA using the four ribonucleoside triphosphates as substrates. The polypeptide is DNA-directed RNA polymerase subunit beta (Pelagibacter ubique (strain HTCC1062)).